Reading from the N-terminus, the 312-residue chain is Fibrinogen-like protein 1 (312 aa).

The signal sequence occupies residues 1-22 (MAKVFSFILVTTALTMGREISA). Residues 23–61 (LEDCAQEQMRLRAQVRLLETRVKQQQVKIKQLLQENEVQ) are a coiled coil. The Fibrinogen C-terminal domain maps to 74–306 (LGSKRQYADC…SVVMKIRPND (233 aa)). Intrachain disulfides connect Cys83–Cys112 and Cys248–Cys261.

In terms of assembly, homodimer. Interacts (via the Fibrinogen C-terminal domain) with LAG3 (via Ig-like domains 1 and 2). In terms of tissue distribution, under normal conditions, liver-specific.

It localises to the secreted. Its function is as follows. Immune suppressive molecule that inhibits antigen-specific T-cell activation by acting as a major ligand of LAG3. Responsible for LAG3 T-cell inhibitory function. Binds LAG3 independently from MHC class II (MHC-II). Secreted by, and promotes growth of, hepatocytes. This is Fibrinogen-like protein 1 from Homo sapiens (Human).